The chain runs to 182 residues: Auxin-responsive protein IAA9 (182 aa).

Positions 1–41 are disordered; sequence MELELGLAPPNSGHLVVDELSSSSSSGGGSGSAPVSASSAG. Positions 3-7 match the EAR-like (transcriptional repression) motif; that stretch reads LELGL. The span at 32–41 shows a compositional bias: low complexity; the sequence is SAPVSASSAG. The region spanning 92–182 is the PB1 domain; sequence ANYVKVKKEG…RSVKRLKILG (91 aa).

This sequence belongs to the Aux/IAA family. Homodimers and heterodimers. In terms of tissue distribution, expressed in etiolated shoots and flowers.

It localises to the nucleus. In terms of biological role, aux/IAA proteins are short-lived transcriptional factors that function as repressors of early auxin response genes at low auxin concentrations. The sequence is that of Auxin-responsive protein IAA9 (IAA9) from Oryza sativa subsp. japonica (Rice).